Here is a 249-residue protein sequence, read N- to C-terminus: Ribosomal RNA small subunit methyltransferase J (249 aa).

Residues 97 to 98 (RD), 113 to 114 (ER), and Asp167 each bind S-adenosyl-L-methionine.

The protein belongs to the methyltransferase superfamily. RsmJ family.

The protein resides in the cytoplasm. It catalyses the reaction guanosine(1516) in 16S rRNA + S-adenosyl-L-methionine = N(2)-methylguanosine(1516) in 16S rRNA + S-adenosyl-L-homocysteine + H(+). Its function is as follows. Specifically methylates the guanosine in position 1516 of 16S rRNA. This Aeromonas salmonicida (strain A449) protein is Ribosomal RNA small subunit methyltransferase J.